A 29-amino-acid chain; its full sequence is Conotoxin pr6a (29 aa).

Disulfide bonds link cysteine 2–cysteine 20, cysteine 9–cysteine 24, and cysteine 19–cysteine 28.

As to expression, expressed by the venom duct.

It is found in the secreted. Intraperitoneal injection into fish (1 nmol) provokes hyperactivity and erratic swimming in various directions after 14 minutes. This chain is Conotoxin pr6a, found in Conus parius (Cone snail).